A 572-amino-acid polypeptide reads, in one-letter code: MGSEPFQKKNLGLQINSQESGTTRSTFHSLEDLGDDVINESWDQVNQKRANIDHDVFHEHPDSSPSLSAQKAKTKEEEVAVKSSNSQSRDPSPDTQAHIPYTYFSKDQRLIIFGIIIFIGFLGPMSGNIYIPALPLLQREYDVSATTINATVSVFMAVFSVGPLFWGALADFGGRKFLYMVSLSLMLIVNILLAAVPVNIAALFVLRIFQAFASSSVISLGAGTVTDVVPPKHRGKAIAYFMMGPNMGPIIAPIVAGLILMKGNYWRWLFGFTSIMTGIALILVTALLPETLRCIVGNGDPKWGDKKDERENNESPFFEGNKISHRRLFPDIGIRKPVNNDAFFQENFPKPPKAGLTLYWKMIKCPPIIITSVSTALLFSSYYAFSVTFSYYLEHDYRFTMLEIGAAYVCPGVAMLLGSQSGGHLSDYLRSRWIKSHPKKKFPAEFRLLLNLIGILLTICGTIGYGWAIFFHYHFVVLLVFSALTAFGMTWCSNTSMTYLTELFPKRAAGTVAVSSFFRNVGAAISSAIILQLCNAMGIGWCFTGLGLCSSISLIGILYLLIFQRKYTAKEF.

Disordered regions lie at residues 1–28 (MGSE…STFH) and 49–95 (RANI…SPDT). Topologically, residues 1–110 (MGSEPFQKKN…YTYFSKDQRL (110 aa)) are cytoplasmic. Residues 13–28 (LQINSQESGTTRSTFH) are compositionally biased toward polar residues. Basic and acidic residues predominate over residues 50–62 (ANIDHDVFHEHPD). A compositionally biased stretch (polar residues) spans 83-95 (SSNSQSRDPSPDT). Residues 111–131 (IIFGIIIFIGFLGPMSGNIYI) traverse the membrane as a helical segment. Topologically, residues 132 to 149 (PALPLLQREYDVSATTIN) are extracellular. Residues 150 to 170 (ATVSVFMAVFSVGPLFWGALA) traverse the membrane as a helical segment. Residues 171–184 (DFGGRKFLYMVSLS) are Cytoplasmic-facing. The chain crosses the membrane as a helical span at residues 185 to 205 (LMLIVNILLAAVPVNIAALFV). Over 206–207 (LR) the chain is Extracellular. Residues 208-228 (IFQAFASSSVISLGAGTVTDV) traverse the membrane as a helical segment. The Cytoplasmic portion of the chain corresponds to 229–240 (VPPKHRGKAIAY). A helical membrane pass occupies residues 241 to 261 (FMMGPNMGPIIAPIVAGLILM). The Extracellular portion of the chain corresponds to 262–267 (KGNYWR). A helical membrane pass occupies residues 268–288 (WLFGFTSIMTGIALILVTALL). Over 289 to 366 (PETLRCIVGN…TLYWKMIKCP (78 aa)) the chain is Cytoplasmic. The helical transmembrane segment at 367-387 (PIIITSVSTALLFSSYYAFSV) threads the bilayer. Residues 388 to 398 (TFSYYLEHDYR) lie on the Extracellular side of the membrane. The helical transmembrane segment at 399 to 419 (FTMLEIGAAYVCPGVAMLLGS) threads the bilayer. The Cytoplasmic segment spans residues 420-446 (QSGGHLSDYLRSRWIKSHPKKKFPAEF). A helical transmembrane segment spans residues 447–469 (RLLLNLIGILLTICGTIGYGWAI). Residues 470–472 (FFH) lie on the Extracellular side of the membrane. A helical transmembrane segment spans residues 473–493 (YHFVVLLVFSALTAFGMTWCS). Over 494–520 (NTSMTYLTELFPKRAAGTVAVSSFFRN) the chain is Cytoplasmic. The chain crosses the membrane as a helical span at residues 521-541 (VGAAISSAIILQLCNAMGIGW). Position 542 (C542) is a topological domain, extracellular. The chain crosses the membrane as a helical span at residues 543–563 (FTGLGLCSSISLIGILYLLIF). A required for the localization to the prospore membrane region spans residues 548 to 572 (LCSSISLIGILYLLIFQRKYTAKEF). The Cytoplasmic segment spans residues 564 to 572 (QRKYTAKEF).

It belongs to the major facilitator superfamily. CAR1 family. In terms of processing, phosphorylated.

The protein localises to the prospore membrane. Prospore-specific dityrosine transporter responsible for translocation of dityrosine through the prospore membrane and required for the formation of the outermost layer of the spore. The protein is Dityrosine transporter 1 (DTR1) of Saccharomyces cerevisiae (strain ATCC 204508 / S288c) (Baker's yeast).